The following is a 399-amino-acid chain: Tryptophan synthase beta chain (399 aa).

N6-(pyridoxal phosphate)lysine is present on Lys-90.

Belongs to the TrpB family. As to quaternary structure, tetramer of two alpha and two beta chains. It depends on pyridoxal 5'-phosphate as a cofactor.

The catalysed reaction is (1S,2R)-1-C-(indol-3-yl)glycerol 3-phosphate + L-serine = D-glyceraldehyde 3-phosphate + L-tryptophan + H2O. It participates in amino-acid biosynthesis; L-tryptophan biosynthesis; L-tryptophan from chorismate: step 5/5. Its function is as follows. The beta subunit is responsible for the synthesis of L-tryptophan from indole and L-serine. The polypeptide is Tryptophan synthase beta chain (Lactiplantibacillus plantarum (strain ATCC BAA-793 / NCIMB 8826 / WCFS1) (Lactobacillus plantarum)).